The chain runs to 426 residues: Interferon regulatory factor 8 (426 aa).

The segment at residues 7–114 (GRRLRQWLIE…EPYKVYRIVP (108 aa)) is a DNA-binding region (IRF tryptophan pentad repeat).

This sequence belongs to the IRF family. In terms of assembly, interacts (via C-terminus) with TRIM21 (via C-terminus). Interacts with the BATF-JUNB heterodimer. Interacts with BATF (via bZIP domain); the interaction is direct. Interacts with COPS2. Interacts with SPI1. In terms of processing, ubiquitinated. Ubiquitination by TRIM21 in macrophages, a process that is strongly increased upon interferon gamma stimulation, leds to the enhanced transcriptional activity of target cytokine genes. Ubiquitination leads to its degradation by the proteasome. Sumoylated with SUMO3. Desumoylated by SENP1. Predominantly expressed in lymphoid tissues.

The protein resides in the nucleus. It is found in the cytoplasm. Transcription factor that specifically binds to the upstream regulatory region of type I interferon (IFN) and IFN-inducible MHC class I genes (the interferon consensus sequence (ICS)). Can both act as a transcriptional activator or repressor. Plays a negative regulatory role in cells of the immune system. Involved in CD8(+) dendritic cell differentiation by forming a complex with the BATF-JUNB heterodimer in immune cells, leading to recognition of AICE sequence (5'-TGAnTCA/GAAA-3'), an immune-specific regulatory element, followed by cooperative binding of BATF and IRF8 and activation of genes. Required for the development of plasmacytoid dendritic cells (pDCs), which produce most of the type I IFN in response to viral infection. Positively regulates macroautophagy in dendritic cells. Acts as a transcriptional repressor of osteoclast differentiation factors such as NFATC1 and EEIG1. The chain is Interferon regulatory factor 8 from Homo sapiens (Human).